Here is a 49-residue protein sequence, read N- to C-terminus: Turripeptide OL47 (49 aa).

Positions 28–49 (RSDTEKKCTGGPDPCPPRQWPD) are disordered. Over residues 40 to 49 (DPCPPRQWPD) the composition is skewed to pro residues.

Contains 4 disulfide bonds. As to expression, expressed by the venom duct.

It is found in the secreted. Its function is as follows. Acts as a neurotoxin by inhibiting an ion channel. The chain is Turripeptide OL47 from Iotyrris olangoensis (Sea snail).